Here is a 268-residue protein sequence, read N- to C-terminus: 4-hydroxy-tetrahydrodipicolinate reductase (268 aa).

Residues Gly-9–Met-14, Glu-35, Gly-99–Thr-101, and Ala-123–Tyr-126 each bind NAD(+). Catalysis depends on His-156, which acts as the Proton donor/acceptor. Position 157 (His-157) interacts with (S)-2,3,4,5-tetrahydrodipicolinate. Lys-160 functions as the Proton donor in the catalytic mechanism. Gly-166–Thr-167 lines the (S)-2,3,4,5-tetrahydrodipicolinate pocket.

The protein belongs to the DapB family.

Its subcellular location is the cytoplasm. It catalyses the reaction (S)-2,3,4,5-tetrahydrodipicolinate + NAD(+) + H2O = (2S,4S)-4-hydroxy-2,3,4,5-tetrahydrodipicolinate + NADH + H(+). It carries out the reaction (S)-2,3,4,5-tetrahydrodipicolinate + NADP(+) + H2O = (2S,4S)-4-hydroxy-2,3,4,5-tetrahydrodipicolinate + NADPH + H(+). It functions in the pathway amino-acid biosynthesis; L-lysine biosynthesis via DAP pathway; (S)-tetrahydrodipicolinate from L-aspartate: step 4/4. Functionally, catalyzes the conversion of 4-hydroxy-tetrahydrodipicolinate (HTPA) to tetrahydrodipicolinate. This is 4-hydroxy-tetrahydrodipicolinate reductase from Magnetococcus marinus (strain ATCC BAA-1437 / JCM 17883 / MC-1).